A 78-amino-acid polypeptide reads, in one-letter code: Acyl carrier protein (78 aa).

A Carrier domain is found at 2–77 (STIEERVKKI…AAIDYINGHQ (76 aa)). Residue Ser37 is modified to O-(pantetheine 4'-phosphoryl)serine.

Belongs to the acyl carrier protein (ACP) family. Post-translationally, 4'-phosphopantetheine is transferred from CoA to a specific serine of apo-ACP by AcpS. This modification is essential for activity because fatty acids are bound in thioester linkage to the sulfhydryl of the prosthetic group.

The protein localises to the cytoplasm. It functions in the pathway lipid metabolism; fatty acid biosynthesis. Carrier of the growing fatty acid chain in fatty acid biosynthesis. This is Acyl carrier protein from Shigella flexneri.